A 125-amino-acid chain; its full sequence is Protein ApaG (125 aa).

The ApaG domain occupies 3-125 (TAVTEGIEVT…FPLVVPGSLN (123 aa)).

The protein is Protein ApaG of Anaeromyxobacter dehalogenans (strain 2CP-1 / ATCC BAA-258).